A 200-amino-acid chain; its full sequence is NAD(P)H dehydrogenase (quinone) (200 aa).

The region spanning 7 to 199 (LAIVFYSSTG…RQVELTAKLL (193 aa)) is the Flavodoxin-like domain. FMN contacts are provided by residues 13–18 (SSTGTG), 86–88 (TRF), 121–127 (SAQNVNG), and H142.

It belongs to the WrbA family. Homotetramer. It depends on FMN as a cofactor.

It carries out the reaction a quinone + NADH + H(+) = a quinol + NAD(+). The catalysed reaction is a quinone + NADPH + H(+) = a quinol + NADP(+). The sequence is that of NAD(P)H dehydrogenase (quinone) from Deinococcus radiodurans (strain ATCC 13939 / DSM 20539 / JCM 16871 / CCUG 27074 / LMG 4051 / NBRC 15346 / NCIMB 9279 / VKM B-1422 / R1).